Consider the following 106-residue polypeptide: Nucleoid-associated protein Smal_0858 (106 aa).

Positions 81-106 (IDAESKSKMGSATAGMQLPPGMKLPF) are disordered.

This sequence belongs to the YbaB/EbfC family. In terms of assembly, homodimer.

It is found in the cytoplasm. Its subcellular location is the nucleoid. Binds to DNA and alters its conformation. May be involved in regulation of gene expression, nucleoid organization and DNA protection. This chain is Nucleoid-associated protein Smal_0858, found in Stenotrophomonas maltophilia (strain R551-3).